We begin with the raw amino-acid sequence, 44 residues long: Thaumatin-like protein 5 (44 aa).

The protein belongs to the thaumatin family.

This chain is Thaumatin-like protein 5, found in Glebionis coronaria (Crown daisy).